We begin with the raw amino-acid sequence, 336 residues long: UPF0324 membrane protein lp_2841 (336 aa).

Helical transmembrane passes span 5–22 (GILP…ISQG), 26–48 (FVPA…NTFL), 84–106 (IGGF…ALWL), 116–138 (VRML…IAPV), 150–172 (ITLV…MAVF), 204–226 (TVQF…VLIF), 255–277 (WYVA…AIIG), 282–304 (TISS…LVNF), and 311–333 (LALY…ITLL).

The protein belongs to the UPF0324 family.

It localises to the cell membrane. The chain is UPF0324 membrane protein lp_2841 from Lactiplantibacillus plantarum (strain ATCC BAA-793 / NCIMB 8826 / WCFS1) (Lactobacillus plantarum).